The primary structure comprises 334 residues: uncharacterized protein (334 aa).

Belongs to the MG414/MG415 family.

This is an uncharacterized protein from Mycoplasma pneumoniae (strain ATCC 29342 / M129 / Subtype 1) (Mycoplasmoides pneumoniae).